We begin with the raw amino-acid sequence, 366 residues long: Methylthioribose-1-phosphate isomerase (366 aa).

Residue Asp260 is the Proton donor of the active site.

Belongs to the eIF-2B alpha/beta/delta subunits family. MtnA subfamily.

Its subcellular location is the cytoplasm. It is found in the nucleus. It carries out the reaction 5-(methylsulfanyl)-alpha-D-ribose 1-phosphate = 5-(methylsulfanyl)-D-ribulose 1-phosphate. It functions in the pathway amino-acid biosynthesis; L-methionine biosynthesis via salvage pathway; L-methionine from S-methyl-5-thio-alpha-D-ribose 1-phosphate: step 1/6. Functionally, catalyzes the interconversion of methylthioribose-1-phosphate (MTR-1-P) into methylthioribulose-1-phosphate (MTRu-1-P). The polypeptide is Methylthioribose-1-phosphate isomerase (Caenorhabditis elegans).